Reading from the N-terminus, the 331-residue chain is Ketol-acid reductoisomerase (NADP(+)) (331 aa).

Residues 2-182 (AQLFYDSDAD…GGTRAGILET (181 aa)) form the KARI N-terminal Rossmann domain. Residues 25 to 28 (YGSQ), Ser51, Ser53, and 83 to 86 (DEFQ) contribute to the NADP(+) site. His108 is an active-site residue. Residue Gly134 coordinates NADP(+). Positions 183–328 (NFKEETETDL…KGLRSMFSWL (146 aa)) constitute a KARI C-terminal knotted domain. The Mg(2+) site is built by Asp191, Glu195, Glu227, and Glu231. Ser252 contacts substrate.

It belongs to the ketol-acid reductoisomerase family. Requires Mg(2+) as cofactor.

The enzyme catalyses (2R)-2,3-dihydroxy-3-methylbutanoate + NADP(+) = (2S)-2-acetolactate + NADPH + H(+). It catalyses the reaction (2R,3R)-2,3-dihydroxy-3-methylpentanoate + NADP(+) = (S)-2-ethyl-2-hydroxy-3-oxobutanoate + NADPH + H(+). Its pathway is amino-acid biosynthesis; L-isoleucine biosynthesis; L-isoleucine from 2-oxobutanoate: step 2/4. It functions in the pathway amino-acid biosynthesis; L-valine biosynthesis; L-valine from pyruvate: step 2/4. Functionally, involved in the biosynthesis of branched-chain amino acids (BCAA). Catalyzes an alkyl-migration followed by a ketol-acid reduction of (S)-2-acetolactate (S2AL) to yield (R)-2,3-dihydroxy-isovalerate. In the isomerase reaction, S2AL is rearranged via a Mg-dependent methyl migration to produce 3-hydroxy-3-methyl-2-ketobutyrate (HMKB). In the reductase reaction, this 2-ketoacid undergoes a metal-dependent reduction by NADPH to yield (R)-2,3-dihydroxy-isovalerate. This is Ketol-acid reductoisomerase (NADP(+)) from Synechococcus sp. (strain CC9605).